Consider the following 488-residue polypeptide: Fumarate hydratase, mitochondrial (488 aa).

The transit peptide at 1–24 (MLRFTNCSCKTFVKSSYKLNIRRM) directs the protein to the mitochondrion. Residues 124–126 (SGT), 154–157 (HPNN), 164–166 (SSN), and Thr-212 contribute to the substrate site. His-213 serves as the catalytic Proton donor/acceptor. Residue Ser-343 is part of the active site. Substrate-binding positions include Ser-344 and 349–351 (KVN). Residue Thr-428 is modified to Phosphothreonine.

The protein belongs to the class-II fumarase/aspartase family. Fumarase subfamily. As to quaternary structure, homotetramer.

It localises to the mitochondrion matrix. The protein localises to the cytoplasm. It is found in the nucleus. It catalyses the reaction (S)-malate = fumarate + H2O. It functions in the pathway carbohydrate metabolism; tricarboxylic acid cycle; (S)-malate from fumarate: step 1/1. In terms of biological role, catalyzes the reversible stereospecific interconversion of fumarate to L-malate. In mitochondrion, catalyzes the hydration of fumarate to L-malate in the tricarboxylic acid (TCA) cycle to facilitate a transition step in the production of energy in the form of NADH. In cytoplasm and nucleus, involved in DNA repair in response to DNA damage: following DNA double-strand breaks (DSBs), translocates from the cytosol to the nucleus and promotes DNA repair by catalyzing the dehydration of L-malate to fumarate. In Saccharomyces cerevisiae (strain ATCC 204508 / S288c) (Baker's yeast), this protein is Fumarate hydratase, mitochondrial.